Reading from the N-terminus, the 704-residue chain is Elongation factor G (704 aa).

One can recognise a tr-type G domain in the interval 6 to 282; it reads NKVRNIGIMA…AVIDYLPTPL (277 aa). GTP-binding positions include 15 to 22, 79 to 83, and 133 to 136; these read AHIDAGKT, DTPGH, and NKMD.

This sequence belongs to the TRAFAC class translation factor GTPase superfamily. Classic translation factor GTPase family. EF-G/EF-2 subfamily.

Its subcellular location is the cytoplasm. Catalyzes the GTP-dependent ribosomal translocation step during translation elongation. During this step, the ribosome changes from the pre-translocational (PRE) to the post-translocational (POST) state as the newly formed A-site-bound peptidyl-tRNA and P-site-bound deacylated tRNA move to the P and E sites, respectively. Catalyzes the coordinated movement of the two tRNA molecules, the mRNA and conformational changes in the ribosome. In Corynebacterium diphtheriae (strain ATCC 700971 / NCTC 13129 / Biotype gravis), this protein is Elongation factor G.